The following is a 740-amino-acid chain: Elongation factor 2 (740 aa).

The tr-type G domain maps to 23–264 (AQIRNAGTLA…MIIEHVPPPN (242 aa)). GTP is bound by residues 32–39 (AHVDHGKT), 98–102 (DTPGH), and 152–155 (NKID). Position 605 is a diphthamide (H605).

The protein belongs to the TRAFAC class translation factor GTPase superfamily. Classic translation factor GTPase family. EF-G/EF-2 subfamily.

Its subcellular location is the cytoplasm. Functionally, catalyzes the GTP-dependent ribosomal translocation step during translation elongation. During this step, the ribosome changes from the pre-translocational (PRE) to the post-translocational (POST) state as the newly formed A-site-bound peptidyl-tRNA and P-site-bound deacylated tRNA move to the P and E sites, respectively. Catalyzes the coordinated movement of the two tRNA molecules, the mRNA and conformational changes in the ribosome. This chain is Elongation factor 2, found in Pyrobaculum arsenaticum (strain DSM 13514 / JCM 11321 / PZ6).